The following is a 41-amino-acid chain: Large ribosomal subunit protein bL36A (41 aa).

The protein belongs to the bacterial ribosomal protein bL36 family.

The polypeptide is Large ribosomal subunit protein bL36A (Aeromonas salmonicida (strain A449)).